Reading from the N-terminus, the 221-residue chain is Cytidylate kinase (221 aa).

7 to 15 is an ATP binding site; the sequence is GPSASGKSS.

The protein belongs to the cytidylate kinase family. Type 1 subfamily.

The protein localises to the cytoplasm. It catalyses the reaction CMP + ATP = CDP + ADP. The catalysed reaction is dCMP + ATP = dCDP + ADP. The polypeptide is Cytidylate kinase (Borreliella burgdorferi (strain ZS7) (Borrelia burgdorferi)).